Consider the following 396-residue polypeptide: Tryptophan synthase beta chain 1 (396 aa).

The residue at position 86 (Lys86) is an N6-(pyridoxal phosphate)lysine.

It belongs to the TrpB family. As to quaternary structure, tetramer of two alpha and two beta chains. Pyridoxal 5'-phosphate serves as cofactor.

The catalysed reaction is (1S,2R)-1-C-(indol-3-yl)glycerol 3-phosphate + L-serine = D-glyceraldehyde 3-phosphate + L-tryptophan + H2O. The protein operates within amino-acid biosynthesis; L-tryptophan biosynthesis; L-tryptophan from chorismate: step 5/5. In terms of biological role, the beta subunit is responsible for the synthesis of L-tryptophan from indole and L-serine. This chain is Tryptophan synthase beta chain 1 (trpB1), found in Vibrio parahaemolyticus serotype O3:K6 (strain RIMD 2210633).